The sequence spans 330 residues: Phytanoyl-CoA hydroxylase-interacting protein (330 aa).

The Fibronectin type-III domain occupies 6 to 115 (TPHSIEINNI…ETVEFCTGDY (110 aa)). N14 and N325 each carry an N-linked (GlcNAc...) asparagine glycan.

It belongs to the PHYHIP family. In terms of assembly, interacts with PHYH and ADGRB1. In terms of tissue distribution, highly expressed in the brain.

In terms of biological role, its interaction with PHYH suggests a role in the development of the central system. The polypeptide is Phytanoyl-CoA hydroxylase-interacting protein (PHYHIP) (Homo sapiens (Human)).